A 275-amino-acid chain; its full sequence is MPRRAREYPEEGELVVATVKRVHNYGAFLDLDEYPGKEGFMHISEVASTWVKNIRDYLREGQKVVAKVIRVDPKKGHIDLSLRRVTQQQRKAKLQEFKRAQKAENLLKLAAEKLGKDFEEAWREVWVPLENEWGEVYAAFEDAARNGIEVLKGYVPDEWLPVLKEIIDSYVEVPTVTIDAEFEITVPKPNGIEIIKEALIKARDRANQEKDIEVKFTYLGAPRYRIDITAPDYYKAEEVLEDIAEEILRVIKEAGGEATLLRKEKRIRKVKKRKK.

The S1 motif domain occupies 12-83 (GELVVATVKR…KKGHIDLSLR (72 aa)).

The protein belongs to the eIF-2-alpha family. Heterotrimer composed of an alpha, a beta and a gamma chain.

Its function is as follows. eIF-2 functions in the early steps of protein synthesis by forming a ternary complex with GTP and initiator tRNA. This chain is Translation initiation factor 2 subunit alpha, found in Pyrococcus furiosus (strain ATCC 43587 / DSM 3638 / JCM 8422 / Vc1).